The sequence spans 488 residues: BRAP2 RING ZnF UBP domain-containing protein 1 (488 aa).

The RING-type; degenerate zinc-finger motif lies at Cys-174–Arg-214. The UBP-type; degenerate zinc finger occupies Leu-208–Cys-301. Residues Cys-225, Cys-228, Cys-237, Cys-240, Cys-245, His-252, His-256, and His-262 each coordinate Zn(2+). Residues Glu-370 to Arg-418 adopt a coiled-coil conformation. The tract at residues Met-453–Lys-488 is disordered. Residues Val-465–Val-478 show a composition bias toward low complexity. Positions Arg-479 to Lys-488 are enriched in basic residues.

In terms of assembly, component of the heteromeric E3 ligase complex made of BRIZ1 and BRIZ2. Forms heterooligomers with BRIZ2 via coiled-coil domains.

It catalyses the reaction S-ubiquitinyl-[E2 ubiquitin-conjugating enzyme]-L-cysteine + [acceptor protein]-L-lysine = [E2 ubiquitin-conjugating enzyme]-L-cysteine + N(6)-ubiquitinyl-[acceptor protein]-L-lysine.. The protein operates within protein modification; protein ubiquitination. RING-type ubiquitin E3 ligase required for seed germination and post-germination growth. The sequence is that of BRAP2 RING ZnF UBP domain-containing protein 1 from Arabidopsis thaliana (Mouse-ear cress).